Consider the following 391-residue polypeptide: Phosphoglycerate kinase (391 aa).

Substrate-binding positions include Asp-21–Asn-23, Arg-36, His-59–Arg-62, Arg-113, and Arg-146. Residues Lys-197, Glu-319, and Gly-345–Thr-348 each bind ATP.

Belongs to the phosphoglycerate kinase family. As to quaternary structure, monomer.

It localises to the cytoplasm. The enzyme catalyses (2R)-3-phosphoglycerate + ATP = (2R)-3-phospho-glyceroyl phosphate + ADP. The protein operates within carbohydrate degradation; glycolysis; pyruvate from D-glyceraldehyde 3-phosphate: step 2/5. The polypeptide is Phosphoglycerate kinase (Xylella fastidiosa (strain 9a5c)).